The following is a 112-amino-acid chain: FK506-binding protein 1 (112 aa).

The span at 1-10 (MSAPATTQVE) shows a compositional bias: polar residues. Residues 1–20 (MSAPATTQVEILQEGDGKTF) are disordered. The PPIase FKBP-type domain maps to 24–112 (GDLVTIHYTG…LFDVELLNVN (89 aa)).

Belongs to the FKBP-type PPIase family. FKBP1 subfamily.

The protein resides in the cytoplasm. It catalyses the reaction [protein]-peptidylproline (omega=180) = [protein]-peptidylproline (omega=0). Its activity is regulated as follows. Inhibited by both FK506 and rapamycin. In terms of biological role, PPIases accelerate the folding of proteins. It catalyzes the cis-trans isomerization of proline imidic peptide bonds in oligopeptides. This Debaryomyces hansenii (strain ATCC 36239 / CBS 767 / BCRC 21394 / JCM 1990 / NBRC 0083 / IGC 2968) (Yeast) protein is FK506-binding protein 1 (FPR1).